The following is a 209-amino-acid chain: NAD(P)H dehydrogenase (quinone) (209 aa).

Residues 4–199 (VNIIFHSVHA…EMARYQGRHV (196 aa)) enclose the Flavodoxin-like domain. Residues 10-15 (SVHAHI) and 87-89 (TRY) each bind FMN. Tryptophan 107 is a binding site for substrate. Residues 122 to 128 (SSGTQHG) and histidine 143 contribute to the FMN site.

It belongs to the WrbA family. It depends on FMN as a cofactor.

It carries out the reaction a quinone + NADH + H(+) = a quinol + NAD(+). It catalyses the reaction a quinone + NADPH + H(+) = a quinol + NADP(+). This is NAD(P)H dehydrogenase (quinone) from Methanosarcina mazei (strain ATCC BAA-159 / DSM 3647 / Goe1 / Go1 / JCM 11833 / OCM 88) (Methanosarcina frisia).